Consider the following 518-residue polypeptide: Protein FAM98A (518 aa).

Disordered stretches follow at residues 300–415 (GRVP…GHSS) and 434–518 (GSGY…HYTS). A compositionally biased stretch (basic and acidic residues) spans 302-311 (VPDRGGRPNE). 3 stretches are compositionally biased toward gly residues: residues 349-364 (GGRGGHEQGGGRGGRG), 383-396 (WTDGGSGGGGGYQD), and 405-415 (QPGGYHGGHSS). Positions 447-459 (RYQDGGHHGDRGG) are enriched in basic and acidic residues. Residues 460 to 484 (GRGGRGGRGGRGGRAGQGGGWGGRG) show a composition bias toward gly residues. Residues 488–504 (YHQGGQFEQHFQHGGYQ) show a composition bias toward low complexity. The segment covering 505–518 (YNHSGFGQGRHYTS) has biased composition (polar residues).

The protein belongs to the FAM98 family. As to quaternary structure, interacts (via N- and C-terminus) with DDX1. Interacts (via N- and C-terminus) with C14orf166. Interacts with FAM98B. Interacts with PLEKHM1 (via N- and C-terminus).

Its function is as follows. Positively stimulates PRMT1-induced protein arginine methylation. Involved in skeletal homeostasis. Positively regulates lysosome peripheral distribution and ruffled border formation in osteoclasts. In Pongo abelii (Sumatran orangutan), this protein is Protein FAM98A.